The primary structure comprises 358 residues: Methylthioribose-1-phosphate isomerase (358 aa).

Substrate-binding positions include 54–56 (RGA), arginine 96, and glutamine 205. The active-site Proton donor is the aspartate 246. Substrate is bound at residue 256-257 (NK).

Belongs to the eIF-2B alpha/beta/delta subunits family. MtnA subfamily.

The catalysed reaction is 5-(methylsulfanyl)-alpha-D-ribose 1-phosphate = 5-(methylsulfanyl)-D-ribulose 1-phosphate. It functions in the pathway amino-acid biosynthesis; L-methionine biosynthesis via salvage pathway; L-methionine from S-methyl-5-thio-alpha-D-ribose 1-phosphate: step 1/6. Its function is as follows. Catalyzes the interconversion of methylthioribose-1-phosphate (MTR-1-P) into methylthioribulose-1-phosphate (MTRu-1-P). The protein is Methylthioribose-1-phosphate isomerase of Stutzerimonas stutzeri (strain A1501) (Pseudomonas stutzeri).